The sequence spans 177 residues: Large ribosomal subunit protein uL6 (177 aa).

The protein belongs to the universal ribosomal protein uL6 family. Part of the 50S ribosomal subunit.

This protein binds to the 23S rRNA, and is important in its secondary structure. It is located near the subunit interface in the base of the L7/L12 stalk, and near the tRNA binding site of the peptidyltransferase center. This chain is Large ribosomal subunit protein uL6, found in Novosphingobium aromaticivorans (strain ATCC 700278 / DSM 12444 / CCUG 56034 / CIP 105152 / NBRC 16084 / F199).